A 376-amino-acid polypeptide reads, in one-letter code: Lipoyl synthase 1, chloroplastic (376 aa).

Residues 1–13 (MIEQSLSKPSFSL) show a composition bias toward polar residues. Disordered stretches follow at residues 1–25 (MIEQ…KSKS) and 47–75 (IDAK…DPNV). A chloroplast-targeting transit peptide spans 1–35 (MIEQSLSKPSFSLSIPIPQPPKSKSSFLCSYSKIR). The [4Fe-4S] cluster site is built by Cys107, Cys112, Cys118, Cys138, Cys142, Cys145, and Ser353. The Radical SAM core domain maps to 121-342 (GGGDGIATAT…KEYGESIGFR (222 aa)).

Belongs to the radical SAM superfamily. Lipoyl synthase family. It depends on [4Fe-4S] cluster as a cofactor.

Its subcellular location is the plastid. The protein localises to the chloroplast. It catalyses the reaction [[Fe-S] cluster scaffold protein carrying a second [4Fe-4S](2+) cluster] + N(6)-octanoyl-L-lysyl-[protein] + 2 oxidized [2Fe-2S]-[ferredoxin] + 2 S-adenosyl-L-methionine + 4 H(+) = [[Fe-S] cluster scaffold protein] + N(6)-[(R)-dihydrolipoyl]-L-lysyl-[protein] + 4 Fe(3+) + 2 hydrogen sulfide + 2 5'-deoxyadenosine + 2 L-methionine + 2 reduced [2Fe-2S]-[ferredoxin]. The protein operates within protein modification; protein lipoylation via endogenous pathway; protein N(6)-(lipoyl)lysine from octanoyl-[acyl-carrier-protein]: step 2/2. Functionally, catalyzes the radical-mediated insertion of two sulfur atoms into the C-6 and C-8 positions of the octanoyl moiety bound to the lipoyl domains of lipoate-dependent enzymes, thereby converting the octanoylated domains into lipoylated derivatives. This chain is Lipoyl synthase 1, chloroplastic, found in Populus trichocarpa (Western balsam poplar).